We begin with the raw amino-acid sequence, 396 residues long: Elongation factor Tu 2 (396 aa).

The tr-type G domain maps to Lys-10–Glu-206. The segment at Gly-19–Thr-26 is G1. Gly-19–Thr-26 is a binding site for GTP. Thr-26 lines the Mg(2+) pocket. The tract at residues Gly-60 to Asn-64 is G2. Residues Asp-81–Gly-84 form a G3 region. Residues Asp-81–His-85 and Asn-136–Asp-139 each bind GTP. The tract at residues Asn-136 to Asp-139 is G4. Residues Ser-174 to Lys-176 are G5.

Belongs to the TRAFAC class translation factor GTPase superfamily. Classic translation factor GTPase family. EF-Tu/EF-1A subfamily. As to quaternary structure, monomer.

It localises to the cytoplasm. The enzyme catalyses GTP + H2O = GDP + phosphate + H(+). Its function is as follows. GTP hydrolase that promotes the GTP-dependent binding of aminoacyl-tRNA to the A-site of ribosomes during protein biosynthesis. This Acidovorax sp. (strain JS42) protein is Elongation factor Tu 2.